The chain runs to 550 residues: Chaperonin GroEL (550 aa).

ATP is bound by residues 30–33 (TLGP), Lys51, 87–91 (DGTTT), Gly415, and Asp495.

This sequence belongs to the chaperonin (HSP60) family. As to quaternary structure, forms a cylinder of 14 subunits composed of two heptameric rings stacked back-to-back. Interacts with the co-chaperonin GroES.

The protein resides in the cytoplasm. It catalyses the reaction ATP + H2O + a folded polypeptide = ADP + phosphate + an unfolded polypeptide.. Functionally, together with its co-chaperonin GroES, plays an essential role in assisting protein folding. The GroEL-GroES system forms a nano-cage that allows encapsulation of the non-native substrate proteins and provides a physical environment optimized to promote and accelerate protein folding. The polypeptide is Chaperonin GroEL (Shewanella piezotolerans (strain WP3 / JCM 13877)).